Here is a 224-residue protein sequence, read N- to C-terminus: Ribonuclease T (224 aa).

In terms of domain architecture, Exonuclease spans 20–194 (VVIDVETAGF…YDTERTAELF (175 aa)). 4 residues coordinate Mg(2+): Asp23, Glu25, His181, and Asp186. The Proton donor/acceptor role is filled by His181.

Belongs to the RNase T family. In terms of assembly, homodimer. It depends on Mg(2+) as a cofactor.

Trims short 3' overhangs of a variety of RNA species, leaving a one or two nucleotide 3' overhang. Responsible for the end-turnover of tRNA: specifically removes the terminal AMP residue from uncharged tRNA (tRNA-C-C-A). Also appears to be involved in tRNA biosynthesis. The sequence is that of Ribonuclease T from Shewanella putrefaciens (strain CN-32 / ATCC BAA-453).